The chain runs to 300 residues: Tyrosine recombinase XerC (300 aa).

The 86-residue stretch at Thr-2–Val-87 folds into the Core-binding (CB) domain. Residues Thr-108–Asp-294 form the Tyr recombinase domain. Catalysis depends on residues Arg-148, Lys-172, His-246, Arg-249, and His-272. Tyr-281 functions as the O-(3'-phospho-DNA)-tyrosine intermediate in the catalytic mechanism.

This sequence belongs to the 'phage' integrase family. XerC subfamily. Forms a cyclic heterotetrameric complex composed of two molecules of XerC and two molecules of XerD.

It localises to the cytoplasm. Site-specific tyrosine recombinase, which acts by catalyzing the cutting and rejoining of the recombining DNA molecules. The XerC-XerD complex is essential to convert dimers of the bacterial chromosome into monomers to permit their segregation at cell division. It also contributes to the segregational stability of plasmids. This Myxococcus xanthus protein is Tyrosine recombinase XerC.